The chain runs to 555 residues: MPKFVFVTGGVVSSIGKGIVAASLGRLLKSRGYNVSILKLDPYLNVDPGTMSPFQHGEVFVTEDGAETDLDLGHYERFTDTALSRLNSVTTGSIYQSVINKERRGDYDGGTVQVIPHITQEIRERIHRVGANSNADVVITEIGGTVGDIESLPFLEAIREFKGDVGKKDIAYIHVTLLPFIGTSGELKTKPTQHSVKELRSIGIQPDLLICRSDRPINDNLKNKISGFCGVNNEAVIPALDADSIYSVPLALKAEGLCKEVLEFLDLTDHECNLEKWQELVHKLRNPGPSVKVAVVGKYVQLNDAYLSVVEALRHACIENDASLDLHWICAEKIEEEGSNDLLTGMDAIVVPGGFGSRGVDGKIAAIQWAREQRVPFLGLCLGMQCAVIEWARNLAGLKEATSFELDQSTPHPVIHLLPEQQDVVDLGGTMRLGVYPCRLQAETMGQKLYGEQVVYERHRHRYEFNNAYRNLFIESGYTISGTSPDGRLVELIELKGHPFFTACQYHPEFLSRPGKPHPLFKGLIAAAQSRLPRSPQEALKQTQINSPNQSKNNP.

Residues 1–267 (MPKFVFVTGG…CKEVLEFLDL (267 aa)) are amidoligase domain. A CTP-binding site is contributed by S13. UTP is bound at residue S13. ATP is bound by residues 14–19 (SIGKGI) and D71. 2 residues coordinate Mg(2+): D71 and E141. CTP is bound by residues 148-150 (DIE), 188-193 (KTKPTQ), and K224. UTP contacts are provided by residues 188-193 (KTKPTQ) and K224. The region spanning 292 to 534 (KVAVVGKYVQ…IAAAQSRLPR (243 aa)) is the Glutamine amidotransferase type-1 domain. An L-glutamine-binding site is contributed by G354. C381 acts as the Nucleophile; for glutamine hydrolysis in catalysis. Residues 382-385 (LGMQ), E405, and R462 each bind L-glutamine. Active-site residues include H507 and E509. The disordered stretch occupies residues 532 to 555 (LPRSPQEALKQTQINSPNQSKNNP). A compositionally biased stretch (polar residues) spans 540-555 (LKQTQINSPNQSKNNP).

Belongs to the CTP synthase family. As to quaternary structure, homotetramer.

It carries out the reaction UTP + L-glutamine + ATP + H2O = CTP + L-glutamate + ADP + phosphate + 2 H(+). The catalysed reaction is L-glutamine + H2O = L-glutamate + NH4(+). The enzyme catalyses UTP + NH4(+) + ATP = CTP + ADP + phosphate + 2 H(+). It functions in the pathway pyrimidine metabolism; CTP biosynthesis via de novo pathway; CTP from UDP: step 2/2. Its activity is regulated as follows. Allosterically activated by GTP, when glutamine is the substrate; GTP has no effect on the reaction when ammonia is the substrate. The allosteric effector GTP functions by stabilizing the protein conformation that binds the tetrahedral intermediate(s) formed during glutamine hydrolysis. Inhibited by the product CTP, via allosteric rather than competitive inhibition. Functionally, catalyzes the ATP-dependent amination of UTP to CTP with either L-glutamine or ammonia as the source of nitrogen. Regulates intracellular CTP levels through interactions with the four ribonucleotide triphosphates. The protein is CTP synthase of Prochlorococcus marinus (strain MIT 9211).